The chain runs to 417 residues: MALSAKLTLDKVDLKGKRVIMRVDFNVPMKNNQITNNQRIKAAIPSIKHCLDNGAKSVVLMSHLGRPDGIPMPDKYSLEPVADELKSLLNKDVIFLKDCVGPEVEQACANPDNGSIILLENLRFHVEEEGKGKDSSGKKISADPAKVEAFQASLSKLGDVYVNDAFGTAHRAHSSTVGVNLPQKASGFLMKKELDYFSKALEKPERPFLAILGGAKVKDKIQLIKNMLDKVNFMIIGGGMAYTFLKELKNMQIGASLFDEEGATIVKEIMEKAEKNGVKIVFPVDFVTGDKFDENAKVGQATIESGIPSGWMGLDCGPESIKINAQIVAQAKLIVWNGPIGVFEWDAFAKGTKALMDEVVKATSNGCVTIIGGGDTATCCAKWGTEDKVSHVSTGGGASLELLEGKILPGVEALSNM.

Residue Ser-4 is modified to Phosphoserine. The residue at position 11 (Lys-11) is an N6-acetyllysine. Residues Val-23, Asp-24, Phe-25, Asn-26, Gln-38, and Arg-39 each coordinate (2R)-3-phosphoglycerate. Position 48 is an N6-acetyllysine (Lys-48). 4 residues coordinate (2R)-3-phosphoglycerate: Ser-62, His-63, Gly-65, and Arg-66. N6-acetyllysine is present on residues Lys-75, Lys-86, and Lys-97. Residues Leu-122 and Arg-123 each contribute to the (2R)-3-phosphoglycerate site. An N6-acetyllysine mark is found at Lys-131 and Lys-146. Residues His-170 and Arg-171 each coordinate (2R)-3-phosphoglycerate. A Phosphotyrosine modification is found at Tyr-196. Position 199 is an N6-acetyllysine (Lys-199). Gly-214 serves as a coordination point for ADP. Gly-214 contacts CDP. Residues Ala-215 and Lys-216 each coordinate AMP. Ala-215 provides a ligand contact to ATP. Residue Ala-215 participates in Mg(2+) binding. Asp-219 contributes to the CDP binding site. Asp-219 is a binding site for Mg(2+). Lys-220 contacts AMP. Lys-220 is a binding site for ATP. Gly-238 provides a ligand contact to ADP. Gly-238 contacts CDP. AMP is bound at residue Gly-239. Gly-239 contributes to the ATP binding site. 2 positions are modified to N6-acetyllysine: Lys-267 and Lys-291. AMP is bound at residue Gly-313. Gly-313 provides a ligand contact to ATP. CDP is bound by residues Gly-338, Ile-340, and Phe-343. Position 343 (Phe-343) interacts with ADP. AMP is bound at residue Glu-344. 3 residues coordinate ATP: Glu-344, Asp-375, and Thr-376. Asp-375 serves as a coordination point for Mg(2+).

The protein belongs to the phosphoglycerate kinase family. As to quaternary structure, monomer. It depends on Mg(2+) as a cofactor. Testis and sperm. Localized on the principle piece in the sperm (at protein level). Testis-specific.

It is found in the cytoplasm. It catalyses the reaction (2R)-3-phosphoglycerate + ATP = (2R)-3-phospho-glyceroyl phosphate + ADP. It functions in the pathway carbohydrate degradation; glycolysis; pyruvate from D-glyceraldehyde 3-phosphate: step 2/5. Essential for sperm motility and male fertility but is not required for the completion of spermatogenesis. This Mus musculus (Mouse) protein is Phosphoglycerate kinase 2 (Pgk2).